Reading from the N-terminus, the 143-residue chain is D-aminoacyl-tRNA deacylase (143 aa).

The Gly-cisPro motif, important for rejection of L-amino acids signature appears at 135 to 136 (GP).

Belongs to the DTD family. As to quaternary structure, homodimer.

Its subcellular location is the cytoplasm. The catalysed reaction is glycyl-tRNA(Ala) + H2O = tRNA(Ala) + glycine + H(+). It catalyses the reaction a D-aminoacyl-tRNA + H2O = a tRNA + a D-alpha-amino acid + H(+). Its function is as follows. An aminoacyl-tRNA editing enzyme that deacylates mischarged D-aminoacyl-tRNAs. Also deacylates mischarged glycyl-tRNA(Ala), protecting cells against glycine mischarging by AlaRS. Acts via tRNA-based rather than protein-based catalysis; rejects L-amino acids rather than detecting D-amino acids in the active site. By recycling D-aminoacyl-tRNA to D-amino acids and free tRNA molecules, this enzyme counteracts the toxicity associated with the formation of D-aminoacyl-tRNA entities in vivo and helps enforce protein L-homochirality. The polypeptide is D-aminoacyl-tRNA deacylase (Mycobacterium bovis (strain ATCC BAA-935 / AF2122/97)).